A 154-amino-acid polypeptide reads, in one-letter code: Major allergen Dau c 1 (154 aa).

The protein belongs to the BetVI family. Homodimer.

This is Major allergen Dau c 1 from Daucus carota (Wild carrot).